We begin with the raw amino-acid sequence, 129 residues long: Small ribosomal subunit protein uS8 (129 aa).

It belongs to the universal ribosomal protein uS8 family. As to quaternary structure, part of the 30S ribosomal subunit. Contacts proteins S5 and S12.

In terms of biological role, one of the primary rRNA binding proteins, it binds directly to 16S rRNA central domain where it helps coordinate assembly of the platform of the 30S subunit. The polypeptide is Small ribosomal subunit protein uS8 (Mesoplasma florum (strain ATCC 33453 / NBRC 100688 / NCTC 11704 / L1) (Acholeplasma florum)).